The following is a 125-amino-acid chain: Large ribosomal subunit protein bL19 (125 aa).

It belongs to the bacterial ribosomal protein bL19 family.

This protein is located at the 30S-50S ribosomal subunit interface and may play a role in the structure and function of the aminoacyl-tRNA binding site. This Ehrlichia ruminantium (strain Gardel) protein is Large ribosomal subunit protein bL19.